The chain runs to 428 residues: MSAIVDIFAREILDSRGNPTVECDVLLESGVMGRAAVPSGASTGQKEALELRDGDKSRYSGKGVLKAVEHVNNQIAQALIGIDASEQSYIDQIMIELDGTENKGNLGANATLAVSMAVARAAAEDAGLPLYRYLGGAGPMSLPVPMMNVINGGEHANNSLNIQEFMIMPVGAKSFREALRCGAEIFHALKKLCDSKGFPTTVGDEGGFAPNLNSHKEALQLMVEATEAAGYKAGEDVLFALDCASSEFYKDGKYHLEAEGRSYTNAEFAEYLESLVNEFPIISIEDGMDENDWEGWKLLTEKLGGKVQLVGDDLFVTNPKILAEGIEKGVANALLVKVNQIGTLSETLKAVDLAKRNRYASVMSHRSGETEDSTIADLAVATNCMQIKTGSLSRSDRMAKYNQLLRIEEELAEAADYPGKAAFYQLGK.

Glutamine 163 contacts (2R)-2-phosphoglycerate. The active-site Proton donor is the glutamate 205. Residues aspartate 242, glutamate 285, and aspartate 312 each contribute to the Mg(2+) site. Residues lysine 337, arginine 366, serine 367, and lysine 388 each coordinate (2R)-2-phosphoglycerate. The Proton acceptor role is filled by lysine 337.

Belongs to the enolase family. It depends on Mg(2+) as a cofactor.

Its subcellular location is the cytoplasm. The protein resides in the secreted. It localises to the cell surface. The catalysed reaction is (2R)-2-phosphoglycerate = phosphoenolpyruvate + H2O. It participates in carbohydrate degradation; glycolysis; pyruvate from D-glyceraldehyde 3-phosphate: step 4/5. Catalyzes the reversible conversion of 2-phosphoglycerate (2-PG) into phosphoenolpyruvate (PEP). It is essential for the degradation of carbohydrates via glycolysis. This chain is Enolase, found in Neisseria meningitidis serogroup C / serotype 2a (strain ATCC 700532 / DSM 15464 / FAM18).